The primary structure comprises 589 residues: L-fucose isomerase (589 aa).

Active-site proton acceptor residues include Glu-340 and Asp-364. Positions 340, 364, and 527 each coordinate Mn(2+).

It belongs to the L-fucose isomerase family. The cofactor is Mn(2+).

Its subcellular location is the cytoplasm. The enzyme catalyses L-fucose = L-fuculose. It participates in carbohydrate degradation; L-fucose degradation; L-lactaldehyde and glycerone phosphate from L-fucose: step 1/3. Its function is as follows. Converts the aldose L-fucose into the corresponding ketose L-fuculose. The chain is L-fucose isomerase from Haemophilus influenzae (strain PittEE).